The following is a 129-amino-acid chain: uncharacterized protein (129 aa).

The interval 52 to 94 is disordered; the sequence is NGDEESQDDWLNDLLKSDGDGGKAGPVDPSHPMETTTTDHSSQ. Residues 53–62 are compositionally biased toward acidic residues; the sequence is GDEESQDDWL. Residues 84–94 are compositionally biased toward polar residues; that stretch reads METTTTDHSSQ.

This is an uncharacterized protein from Caenorhabditis elegans.